The chain runs to 264 residues: Glutamate racemase (264 aa).

Residues 11–12 and 43–44 each bind substrate; these read DS and YG. C74 functions as the Proton donor/acceptor in the catalytic mechanism. 75–76 provides a ligand contact to substrate; that stretch reads NT. C193 functions as the Proton donor/acceptor in the catalytic mechanism. 194–195 contributes to the substrate binding site; the sequence is TH.

This sequence belongs to the aspartate/glutamate racemases family.

The catalysed reaction is L-glutamate = D-glutamate. It functions in the pathway cell wall biogenesis; peptidoglycan biosynthesis. In terms of biological role, provides the (R)-glutamate required for cell wall biosynthesis. This Bifidobacterium longum (strain DJO10A) protein is Glutamate racemase.